Here is a 110-residue protein sequence, read N- to C-terminus: B3 domain-containing protein LOC_Os02g10420 (110 aa).

A DNA-binding region (TF-B3) is located at residues 1–104 (MSAMLNENVP…VLSVTVHKAD (104 aa)).

The protein resides in the nucleus. This chain is B3 domain-containing protein LOC_Os02g10420, found in Oryza sativa subsp. japonica (Rice).